Reading from the N-terminus, the 196-residue chain is Nucleoid occlusion factor SlmA (196 aa).

One can recognise an HTH tetR-type domain in the interval 7-68 (INRREEILQA…GLIEFIEESL (62 aa)). The segment at residues 31-50 (TTAKLAKQVGVSEAALYRHF) is a DNA-binding region (H-T-H motif). Positions 110–139 (HALMFENERLRDRINQLFERIETSLRQILR) form a coiled coil.

Belongs to the nucleoid occlusion factor SlmA family. In terms of assembly, homodimer. Interacts with FtsZ.

The protein localises to the cytoplasm. Its subcellular location is the nucleoid. Functionally, required for nucleoid occlusion (NO) phenomenon, which prevents Z-ring formation and cell division over the nucleoid. Acts as a DNA-associated cell division inhibitor that binds simultaneously chromosomal DNA and FtsZ, and disrupts the assembly of FtsZ polymers. SlmA-DNA-binding sequences (SBS) are dispersed on non-Ter regions of the chromosome, preventing FtsZ polymerization at these regions. The protein is Nucleoid occlusion factor SlmA of Vibrio cholerae serotype O1 (strain ATCC 39315 / El Tor Inaba N16961).